A 116-amino-acid polypeptide reads, in one-letter code: Spexin (116 aa).

Residues 1 to 26 (MKGLRSLAATTLALFLVFVFLGNSSC) form the signal peptide. Positions 27-35 (APQRLLERR) are excised as a propeptide. The residue at position 49 (Q49) is a Glutamine amide. 2 consecutive propeptides follow at residues 50 to 116 (GRRF…LLNW) and 74 to 116 (PNPQ…LLNW). Residues 55-73 (SDQSRRKDLSDRPLPERRS) show a composition bias toward basic and acidic residues. Residues 55-77 (SDQSRRKDLSDRPLPERRSPNPQ) are disordered.

It belongs to the spexin family. Expressed in the type I glomic cells within the carotid body (at protein level). Expressed predominantly in pancreas, testis, kidney, brain and placenta. Expressed in submucosal layer of esophagus and stomach fundus.

The protein localises to the secreted. It is found in the extracellular space. The protein resides in the cytoplasmic vesicle. Its subcellular location is the secretory vesicle. Functionally, plays a role as a central modulator of cardiovascular and renal function and nociception. Also plays a role in energy metabolism and storage. Inhibits adrenocortical cell proliferation with minor stimulation on corticosteroid release. Acts as a ligand for galanin receptors GALR2 and GALR3. Intracerebroventricular administration of the peptide induces an increase in arterial blood pressure, a decrease in both heart rate and renal excretion and delayed natriuresis. Intraventricular administration of the peptide induces antinociceptive activity. Also induces contraction of muscarinic-like stomach smooth muscles. Intraperitoneal administration of the peptide induces a reduction in food consumption and body weight. Inhibits long chain fatty acid uptake into adipocytes. In terms of biological role, intracerebroventricular administration of the peptide induces a decrease in heart rate, but no change in arterial pressure, and an increase in urine flow rate. Intraventricular administration of the peptide induces antinociceptive activity. This is Spexin (SPX) from Homo sapiens (Human).